Reading from the N-terminus, the 709-residue chain is Polyribonucleotide nucleotidyltransferase (709 aa).

2 residues coordinate Mg(2+): D487 and D493. Positions 554–613 (PRIHTMKISSDKIKDVIGKGGAVIRALCEETGTTIEIEDDGTIKIAATEGAAAKEAIRRI) constitute a KH domain. The region spanning 623-691 (GKIYTGKVMR…RQGRIRLSIK (69 aa)) is the S1 motif domain.

This sequence belongs to the polyribonucleotide nucleotidyltransferase family. As to quaternary structure, component of the RNA degradosome, which is a multiprotein complex involved in RNA processing and mRNA degradation. Mg(2+) serves as cofactor.

The protein localises to the cytoplasm. It carries out the reaction RNA(n+1) + phosphate = RNA(n) + a ribonucleoside 5'-diphosphate. Functionally, involved in mRNA degradation. Catalyzes the phosphorolysis of single-stranded polyribonucleotides processively in the 3'- to 5'-direction. This Aliivibrio fischeri (strain MJ11) (Vibrio fischeri) protein is Polyribonucleotide nucleotidyltransferase.